Consider the following 139-residue polypeptide: Small ribosomal subunit protein bS6 (139 aa).

Positions 114 to 133 (KKEPREPRAPREPRVEKVDE) are enriched in basic and acidic residues. The disordered stretch occupies residues 114–139 (KKEPREPRAPREPRVEKVDEQTFTEE).

The protein belongs to the bacterial ribosomal protein bS6 family.

Functionally, binds together with bS18 to 16S ribosomal RNA. The protein is Small ribosomal subunit protein bS6 of Campylobacter concisus (strain 13826).